A 116-amino-acid polypeptide reads, in one-letter code: Large ribosomal subunit protein bL17 (116 aa).

Belongs to the bacterial ribosomal protein bL17 family. In terms of assembly, part of the 50S ribosomal subunit. Contacts protein L32.

The chain is Large ribosomal subunit protein bL17 from Synechococcus sp. (strain WH7803).